Consider the following 464-residue polypeptide: Armadillo repeat-containing protein 6 homolog (464 aa).

Phosphothreonine is present on Thr-9. ARM repeat units follow at residues 235–275, 287–331, 332–374, and 375–418; these read AHEH…TLAV, GGLK…QQGV, APII…FDTG, and IAEV…ISFG.

Belongs to the ARMC6 family.

This is Armadillo repeat-containing protein 6 homolog from Drosophila melanogaster (Fruit fly).